Here is a 170-residue protein sequence, read N- to C-terminus: Extracellular globin-3 (170 aa).

The first 17 residues, 1–17 (MLRQLLVLVGLAVVCLA), serve as a signal peptide directing secretion. Residues 23 to 169 (CCSEEDHRIV…ILTKISSRLN (147 aa)) enclose the Globin domain. Residues cysteine 24 and cysteine 156 are joined by a disulfide bond. Heme b is bound at residue histidine 119.

This sequence belongs to the globin family. The extracellular hemoglobin of the earthworm consists of 12 subunits that have a hexagonal bilayer structure with a molecular weight near 3.8 million. Each one-twelfth subunit is composed primarily of disulfide linked trimers (chains A, B, and C) and monomers (chain D).

It is found in the secreted. The protein is Extracellular globin-3 of Lumbricus terrestris (Common earthworm).